The following is a 384-amino-acid chain: Odorant receptor 46a, isoform B (384 aa).

Over 1–37 (MVTEDFYKYQVWYFQILGVWQLPTWAADHQRRFQSMR) the chain is Cytoplasmic. A helical transmembrane segment spans residues 38 to 58 (FGFILVILFIMLLLFSFEMLN). Asn-59 carries an N-linked (GlcNAc...) asparagine glycan. Topologically, residues 59-65 (NISQVRE) are extracellular. A helical membrane pass occupies residues 66–86 (ILKVFFMFATEISCMAKLLHL). At 87-130 (KLKSRKLAGLVDAMLSPEFGVKSEQEMQMLELDRVAVVRMRNSY) the chain is on the cytoplasmic side. The chain crosses the membrane as a helical span at residues 131 to 151 (GIMSLGAASLILIVPCFDNFG). The Extracellular segment spans residues 152–165 (ELPLAMLEVCSIEG). Residues 166–186 (WICYWSQYLFHSICLLPTCVL) traverse the membrane as a helical segment. Residues 187-247 (NITYDSVAYS…YNRIVRFKDL (61 aa)) lie on the Cytoplasmic side of the membrane. The chain crosses the membrane as a helical span at residues 248–268 (VELFIKGPGSVQLMCSVLVLV). Topologically, residues 269-283 (SNLYDMSTMSIANGD) are extracellular. The helical transmembrane segment at 284–304 (AIFMLKTCIYQLVMLWQIFII) threads the bilayer. Residues 305 to 348 (CYASNEVTVQSSRLCHSIYSSQWTGWNRANRRIVLLMMQRFNSP) are Cytoplasmic-facing. A helical membrane pass occupies residues 349–369 (MLLSTFNPTFAFSLEAFGSIV). Residue Asn-370 is glycosylated (N-linked (GlcNAc...) asparagine). The Extracellular segment spans residues 370–384 (NCSYSYFALLKRVNS).

This sequence belongs to the insect chemoreceptor superfamily. Heteromeric odorant receptor channel (TC 1.A.69) family. Or2a subfamily. Interacts with Orco. Complexes exist early in the endomembrane system in olfactory sensory neurons (OSNs), coupling these complexes to the conserved ciliary trafficking pathway. As to expression, isoform B is expressed in the antenna.

It is found in the cell membrane. Odorant receptor which mediates acceptance or avoidance behavior, depending on its substrates. The odorant receptor repertoire encodes a large collection of odor stimuli that vary widely in identity, intensity, and duration. May form a complex with Orco to form odorant-sensing units, providing sensitive and prolonged odorant signaling and calcium permeability. The sequence is that of Odorant receptor 46a, isoform B (Or46a) from Drosophila melanogaster (Fruit fly).